The following is a 310-amino-acid chain: p-hydroxybenzoic acid efflux pump subunit AaeA (310 aa).

A helical membrane pass occupies residues Ala12 to Tyr32.

This sequence belongs to the membrane fusion protein (MFP) (TC 8.A.1) family.

It localises to the cell inner membrane. Forms an efflux pump with AaeB. The chain is p-hydroxybenzoic acid efflux pump subunit AaeA from Enterobacter sp. (strain 638).